The following is a 37-amino-acid chain: Hemocyanin subunit B (37 aa).

It belongs to the tyrosinase family. Hemocyanin subfamily. In terms of tissue distribution, hemolymph.

The protein localises to the secreted. It is found in the extracellular space. Its function is as follows. Hemocyanins are copper-containing oxygen carriers occurring freely dissolved in the hemolymph of many mollusks and arthropods. The chain is Hemocyanin subunit B from Cancer pagurus (Rock crab).